The primary structure comprises 208 residues: uncharacterized protein (208 aa).

This is an uncharacterized protein from Ureaplasma parvum serovar 3 (strain ATCC 700970).